The chain runs to 95 residues: MFLQLFASKKGVGSTKNGRDSNPKYLGVKKGDGSLVTVGQIIVRQRGTKIHPGANVGRGKDDTLYALADGIVKFGRKGANRKQVSVVPIQLAVEA.

The propeptide occupies 1–6; that stretch reads MFLQLF.

Belongs to the bacterial ribosomal protein bL27 family. The N-terminus is cleaved by ribosomal processing cysteine protease Prp.

This is Large ribosomal subunit protein bL27 from Symbiobacterium thermophilum (strain DSM 24528 / JCM 14929 / IAM 14863 / T).